The following is a 124-amino-acid chain: Putative iron-sulfur cluster insertion protein ErpA (124 aa).

Residues Cys-49, Cys-113, and Cys-115 each contribute to the iron-sulfur cluster site.

This sequence belongs to the HesB/IscA family. As to quaternary structure, homodimer. The cofactor is iron-sulfur cluster.

Its function is as follows. Required for insertion of 4Fe-4S clusters. This is Putative iron-sulfur cluster insertion protein ErpA from Acidovorax sp. (strain JS42).